A 56-amino-acid polypeptide reads, in one-letter code: Venom peptide 5 (56 aa).

An N-terminal signal peptide occupies residues 1 to 26 (MKTASFILSFVVLLIVIITWIGEVSA). Positions 27-42 (VSEPEPVAKATAHAAA) are excised as a propeptide. Cys-49 and Cys-54 are oxidised to a cystine.

In terms of processing, probably contains 1 disulfide bond, which may be crucial for activity, since the linear peptide without disulfide bond is inactive. In terms of tissue distribution, expressed by the venom gland.

Its subcellular location is the secreted. This chain is Venom peptide 5, found in Eumenes pomiformis (Potter wasp).